We begin with the raw amino-acid sequence, 347 residues long: Monopolin complex subunit LRS4 (347 aa).

Residues 46-118 (KKVVDETLFL…QISVDKHNKE (73 aa)) adopt a coiled-coil conformation. A compositionally biased stretch (basic and acidic residues) spans 112–130 (VDKHNKERTPSTGRDEQQR). 2 disordered regions span residues 112–183 (VDKH…SLLS) and 208–230 (RNDTTSSKIAGKSPSRLSALQKS). Polar residues-rich tracts occupy residues 131 to 140 (NSKAAHTSKP) and 155 to 172 (NNQTNDRGGNDPDSPTSQ). Residues serine 168 and serine 230 each carry the phosphoserine modification.

In terms of assembly, component of the monopolin complex composed of at least CSM1, LRS4 and MAM1. The complex associates with the kinetochore. In terms of processing, phosphorylated by CDC5. This phosphorylation is required for the location to the kinetochores during late pachytene.

It is found in the nucleus. It localises to the nucleolus. The protein resides in the chromosome. The protein localises to the centromere. Functionally, component of the monopolin complex which promotes monoorientation during meiosis I, required for chromosome segregation during meiosis. Involved in rDNA silencing. This chain is Monopolin complex subunit LRS4 (LRS4), found in Saccharomyces cerevisiae (strain ATCC 204508 / S288c) (Baker's yeast).